Here is a 990-residue protein sequence, read N- to C-terminus: A-type ATP synthase subunit B (990 aa).

The 124-residue stretch at 491–614 (VAGLIASDGS…LQLLLKRLGV (124 aa)) folds into the DOD-type homing endonuclease domain.

Belongs to the ATPase alpha/beta chains family. In terms of assembly, has multiple subunits with at least A(3), B(3), C, D, E, F, H, I and proteolipid K(x). Post-translationally, this protein undergoes a protein self splicing that involves a post-translational excision of the VDE intervening region (intein) followed by peptide ligation.

It localises to the cell membrane. In terms of biological role, component of the A-type ATP synthase that produces ATP from ADP in the presence of a proton gradient across the membrane. The B chain is a regulatory subunit. The sequence is that of A-type ATP synthase subunit B from Methanopyrus kandleri (strain AV19 / DSM 6324 / JCM 9639 / NBRC 100938).